Reading from the N-terminus, the 312-residue chain is Mevalonate kinase (312 aa).

104 to 114 provides a ligand contact to ATP; sequence PISCGLGSSAS. Catalysis depends on D155, which acts as the Proton acceptor.

Belongs to the GHMP kinase family. Mevalonate kinase subfamily. As to quaternary structure, homodimer. It depends on Mg(2+) as a cofactor.

Its subcellular location is the cytoplasm. The catalysed reaction is (R)-mevalonate + ATP = (R)-5-phosphomevalonate + ADP + H(+). The protein operates within isoprenoid biosynthesis; isopentenyl diphosphate biosynthesis via mevalonate pathway; isopentenyl diphosphate from (R)-mevalonate: step 1/3. Farnesyl- and geranyl-pyrophosphates are competitive inhibitors. Slightly inhibited by high concentration of ATP. Its function is as follows. Catalyzes the phosphorylation of (R)-mevalonate (MVA) to (R)-mevalonate 5-phosphate (MVAP). Functions in the mevalonate (MVA) pathway leading to isopentenyl diphosphate (IPP), a key precursor for the biosynthesis of isoprenoid compounds such as archaeal membrane lipids. This chain is Mevalonate kinase, found in Methanocaldococcus jannaschii (strain ATCC 43067 / DSM 2661 / JAL-1 / JCM 10045 / NBRC 100440) (Methanococcus jannaschii).